The chain runs to 560 residues: MKTTKLLIPTQKEAPNDAKIISHQLMIRAGLISKLALGLYSYLPIGIRVLQKVENIIRQEMNKSGAQEVLMPIVQPAELWKESGRWNKYGAELLRFIDRHQREFCLGPTHEEVITHLARQYLRSYKQLPMNFYQIQTKFRDEIRPRFGVIRMREFIMKDAYSFHIDEASLQETYEVMYKTYCNIFNRLGLNYRIVLADSGSIGGNTSHEFHVLADSGEDTICFSDKSDYAANIEKVTFFKQEKTCQSTMVESKVLTKEKTSIEDVSKFLNVKKVNCVKILIIKIKDGFKALALRGDHELNEIKIHNLFGDFEFSTNNEIKNLGLKKGFIGIKNLDIDLIVDYSASVLCDFVCGANECDYHLIGVNWQGIKFIDADLRNAVDGDYSPDGKGKLMIKRGIEVGHIFQLGTKYSSVMKANVIGESGKAVTTTMGCYGIGVTRIIAAFIEQNHDDKGIIFSQAIAPFQIVIVPINYNKSTRVKALADRLYQQFIKASIDVLLDDRKEHVGIMFADSELLGIPHRIVISDTHADNGSVEYKARNKTNKIEVKFDDALSFIQTKMI.

Belongs to the class-II aminoacyl-tRNA synthetase family. ProS type 1 subfamily. In terms of assembly, homodimer.

It localises to the cytoplasm. It carries out the reaction tRNA(Pro) + L-proline + ATP = L-prolyl-tRNA(Pro) + AMP + diphosphate. In terms of biological role, catalyzes the attachment of proline to tRNA(Pro) in a two-step reaction: proline is first activated by ATP to form Pro-AMP and then transferred to the acceptor end of tRNA(Pro). As ProRS can inadvertently accommodate and process non-cognate amino acids such as alanine and cysteine, to avoid such errors it has two additional distinct editing activities against alanine. One activity is designated as 'pretransfer' editing and involves the tRNA(Pro)-independent hydrolysis of activated Ala-AMP. The other activity is designated 'posttransfer' editing and involves deacylation of mischarged Ala-tRNA(Pro). The misacylated Cys-tRNA(Pro) is not edited by ProRS. This is Proline--tRNA ligase from Vesicomyosocius okutanii subsp. Calyptogena okutanii (strain HA).